We begin with the raw amino-acid sequence, 314 residues long: Methionyl-tRNA formyltransferase (314 aa).

Position 110–113 (110–113) interacts with (6S)-5,6,7,8-tetrahydrofolate; the sequence is SLLP.

The protein belongs to the Fmt family.

It carries out the reaction L-methionyl-tRNA(fMet) + (6R)-10-formyltetrahydrofolate = N-formyl-L-methionyl-tRNA(fMet) + (6S)-5,6,7,8-tetrahydrofolate + H(+). In terms of biological role, attaches a formyl group to the free amino group of methionyl-tRNA(fMet). The formyl group appears to play a dual role in the initiator identity of N-formylmethionyl-tRNA by promoting its recognition by IF2 and preventing the misappropriation of this tRNA by the elongation apparatus. This is Methionyl-tRNA formyltransferase from Bacillus cereus (strain AH187).